We begin with the raw amino-acid sequence, 901 residues long: Pyruvate, phosphate dikinase (901 aa).

Residues 1-321 form an N-terminal region; it reads MNIAKSIHFL…WLIEQKPVEA (321 aa). Residues 322–380 are linker 1; it reads KSTISLVRLLLDLYEREVVDAEYVVKSVKPGQLNEILHPVIDMTSVTGLKSSQGGIIGV. A central region spans residues 381-482; sequence PGAAVGRVYF…TINEGDFVTL (102 aa). The residue at position 440 (Ser-440) is a Phosphoserine; by PDRP1. His-442 (tele-phosphohistidine intermediate) is an active-site residue. The tract at residues 483–522 is linker 2; the sequence is NVPYYGESTLYMGAAQLIEPDPETSGLVSFIELAKGFVRS. The segment at 523 to 901 is C-terminal; that stretch reads FHVRANADSP…SAKSGGRRAR (379 aa). Substrate-binding residues include Arg-550, Arg-606, Glu-750, Gly-771, Thr-772, Asn-773, and Asp-774. Glu-750 contacts Mg(2+). Asp-774 is a binding site for Mg(2+). Cys-835 (proton donor) is an active-site residue. The disordered stretch occupies residues 879 to 901; it reads EKEGRKPAWRGRSSAKSGGRRAR.

It belongs to the PEP-utilizing enzyme family. Homodimer. It depends on Mg(2+) as a cofactor. Post-translationally, phosphorylation of Ser-440 in the dark inactivates the enzyme. Dephosphorylation upon light stimulation reactivates the enzyme.

It carries out the reaction pyruvate + phosphate + ATP = phosphoenolpyruvate + AMP + diphosphate + H(+). Its activity is regulated as follows. Activated by light-induced dephosphorylation. Inhibited by dark-induced phosphorylation. Both reactions are catalyzed by PDRP1. In terms of biological role, catalyzes the reversible phosphorylation of pyruvate and phosphate. In Treponema pallidum (strain Nichols), this protein is Pyruvate, phosphate dikinase (ppdK).